A 257-amino-acid polypeptide reads, in one-letter code: Probable S-adenosylmethionine-dependent methyltransferase MSMEG_2350/MSMEI_2290 (257 aa).

Belongs to the methyltransferase superfamily.

Probable S-adenosylmethionine-dependent methyltransferase required for the 6-O-methylation of the polysaccharide backbone of 6-O-methylglucosyl lipopolysaccharides (MGLP). The sequence is that of Probable S-adenosylmethionine-dependent methyltransferase MSMEG_2350/MSMEI_2290 from Mycolicibacterium smegmatis (strain ATCC 700084 / mc(2)155) (Mycobacterium smegmatis).